Reading from the N-terminus, the 404-residue chain is NADH-quinone oxidoreductase subunit D 2 (404 aa).

This sequence belongs to the complex I 49 kDa subunit family. As to quaternary structure, NDH-1 is composed of 14 different subunits. Subunits NuoB, C, D, E, F, and G constitute the peripheral sector of the complex.

The protein localises to the cell inner membrane. The catalysed reaction is a quinone + NADH + 5 H(+)(in) = a quinol + NAD(+) + 4 H(+)(out). Functionally, NDH-1 shuttles electrons from NADH, via FMN and iron-sulfur (Fe-S) centers, to quinones in the respiratory chain. The immediate electron acceptor for the enzyme in this species is believed to be ubiquinone. Couples the redox reaction to proton translocation (for every two electrons transferred, four hydrogen ions are translocated across the cytoplasmic membrane), and thus conserves the redox energy in a proton gradient. The protein is NADH-quinone oxidoreductase subunit D 2 of Rhizobium meliloti (strain 1021) (Ensifer meliloti).